We begin with the raw amino-acid sequence, 333 residues long: Probable G-protein coupled receptor 174 (333 aa).

The Extracellular segment spans residues 1 to 27; the sequence is MPANYTCTRPDGDNTDFRYFIYAVTYT. An N-linked (GlcNAc...) asparagine glycan is attached at asparagine 4. Residues 28–48 form a helical membrane-spanning segment; it reads VILVPGLIGNILALWVFYGYM. Over 49–53 the chain is Cytoplasmic; it reads KETKR. The chain crosses the membrane as a helical span at residues 54 to 74; it reads AVIFMINLAIADLLQVLSLPL. Over 75 to 91 the chain is Extracellular; that stretch reads RIFYYLNHDWPFGPGLC. The cysteines at positions 91 and 168 are disulfide-linked. Residues 92–112 traverse the membrane as a helical segment; it reads MFCFYLKYVNMYASIYFLVCI. Residues 113 to 134 are Cytoplasmic-facing; sequence SVRRFWFLMYPFRFHDCKQKYD. The helical transmembrane segment at 135-155 threads the bilayer; sequence LYISIAGWLIICLACVLFPLL. Residues 156–182 are Extracellular-facing; sequence RTSDDTSGNRTKCFVDLPTRNVNLAQS. N-linked (GlcNAc...) asparagine glycosylation occurs at asparagine 164. The helical transmembrane segment at 183–203 threads the bilayer; the sequence is VVMMTIGELIGFVTPLLIVLY. The Cytoplasmic portion of the chain corresponds to 204 to 231; it reads CTWKTVLSLQDKYPMAQDLGEKQKALKM. The helical transmembrane segment at 232–252 threads the bilayer; that stretch reads ILTCAGVFLICFAPYHFSFPL. At 253–269 the chain is on the extracellular side; the sequence is DFLVKSNEIKSCLARRV. A helical membrane pass occupies residues 270 to 290; that stretch reads ILIFHSVALCLASLNSCLDPV. At 291–333 the chain is on the cytoplasmic side; sequence IYYFSTNEFRRRLSRQDLHDSIQLHAKSFVSNHTASTMTPELC.

The protein belongs to the G-protein coupled receptor 1 family. As to quaternary structure, interacts with GNA13. Interacts with CCL21.

It is found in the cell membrane. Its function is as follows. G-protein-coupled receptor of lysophosphatidylserine (LysoPS) that plays different roles in immune response. Plays a negative role in regulatory T-cell accumulation and homeostasis. Under inflammatory conditions where LysoPS production increases, contributes to the down-regulation of regulatory T-cell activity to favor effector response. Mediates the suppression of IL-2 production in activated T-lymphocytes leading to inhibition of growth, proliferation and differentiation of T-cells. Mechanistically, acts via G(s)-containing heterotrimeric G proteins to trigger elevated cyclic AMP levels and protein kinase A/PKA activity, which may in turn act to antagonize proximal TCR signaling. Plays an important role in the initial period of sepsis through the regulation of macrophage polarization and pro- and anti-inflammatory cytokine secretions. Upon testosterone treatment, acts as a receptor for CCL21 and subsequently triggers through G(q)-alpha and G(12)/G(13) proteins a calcium flux leading to chemotactic effects on activated B-cells. Signals via GNA13 and PKA to promote CD86 up-regulation by follicular B-cells. The protein is Probable G-protein coupled receptor 174 (GPR174) of Homo sapiens (Human).